The chain runs to 700 residues: Sex comb on midleg-like protein 2 (700 aa).

Residues 1 to 33 (MGQTVNEDSMDVKKENQEKTPQSSTSSVQRDDF) form a disordered region. The span at 19–28 (KTPQSSTSSV) shows a compositional bias: polar residues. MBT repeat units follow at residues 33-131 (FHWE…LQPP) and 139-240 (SSWP…LQPP). The segment covering 253–281 (TESSPSEASQHSMQSPQKTTLILPTQQVR) has biased composition (polar residues). Disordered stretches follow at residues 253–320 (TESS…EKPL) and 466–550 (PFSS…SSLN). Phosphoserine is present on residues S256, S261, S267, S299, and S300. At T305 the chain carries Phosphothreonine. A compositionally biased stretch (basic and acidic residues) spans 476–495 (SSAEHDKNQSAKEDVTERQS). Position 499 is a phosphoserine (S499). T503 is subject to Phosphothreonine. The residue at position 511 (S511) is a Phosphoserine. Residue K518 forms a Glycyl lysine isopeptide (Lys-Gly) (interchain with G-Cter in SUMO2) linkage. Position 522 is a phosphoserine (S522). Residues 535 to 545 (PKEENLSEDSK) are compositionally biased toward basic and acidic residues. Residue K536 forms a Glycyl lysine isopeptide (Lys-Gly) (interchain with G-Cter in SUMO2) linkage. 4 positions are modified to phosphoserine: S570, S583, S590, and S594. The span at 575-584 (RSVPGTTSSP) shows a compositional bias: polar residues. A disordered region spans residues 575–594 (RSVPGTTSSPLVGDISPKSS). Residues K599 and K605 each participate in a glycyl lysine isopeptide (Lys-Gly) (interchain with G-Cter in SUMO2) cross-link. The 70-residue stretch at 631 to 700 (WSVDEVIQFM…IEKLKEGKYS (70 aa)) folds into the SAM domain.

The protein belongs to the SCM family. In terms of tissue distribution, highly expressed in placenta, thymus and testis. Detected at lower levels in brain, liver, skeletal muscle, pancreas and ovary.

The protein localises to the nucleus. In terms of biological role, putative Polycomb group (PcG) protein. PcG proteins act by forming multiprotein complexes, which are required to maintain the transcriptionally repressive state of homeotic genes throughout development. This is Sex comb on midleg-like protein 2 (SCML2) from Homo sapiens (Human).